Here is a 563-residue protein sequence, read N- to C-terminus: Bifunctional dihydrofolate reductase-thymidylate synthase (563 aa).

The region spanning 3 to 195 (KFNIIAAINN…ILLRFQEYSV (193 aa)) is the DHFR domain. 117 to 124 (GGGVIYDL) contacts NADP(+). The segment at 275-563 (YIELVKTIME…CPSISAEMIA (289 aa)) is thymidylate synthase. Residue Arg-292 participates in dUMP binding. Cys-435 is a catalytic residue. DUMP contacts are provided by residues His-436, 464–468 (QRSWD), Asn-474, and 504–506 (HIY).

The protein in the N-terminal section; belongs to the dihydrofolate reductase family. In the C-terminal section; belongs to the thymidylate synthase family.

The catalysed reaction is (6S)-5,6,7,8-tetrahydrofolate + NADP(+) = 7,8-dihydrofolate + NADPH + H(+). It carries out the reaction dUMP + (6R)-5,10-methylene-5,6,7,8-tetrahydrofolate = 7,8-dihydrofolate + dTMP. It functions in the pathway cofactor biosynthesis; tetrahydrofolate biosynthesis; 5,6,7,8-tetrahydrofolate from 7,8-dihydrofolate: step 1/1. Its function is as follows. Bifunctional enzyme. Involved in de novo dTMP biosynthesis. Key enzyme in folate metabolism. Catalyzes an essential reaction for de novo glycine and purine synthesis, DNA precursor synthesis, and for the conversion of dUMP to dTMP. The chain is Bifunctional dihydrofolate reductase-thymidylate synthase from Acanthamoeba polyphaga mimivirus (APMV).